Consider the following 212-residue polypeptide: Ribonuclease HII (212 aa).

One can recognise an RNase H type-2 domain in the interval 20 to 209 (TCIVGVDEVG…VHNILYQEAS (190 aa)). A divalent metal cation-binding residues include Asp26, Glu27, and Asp117.

This sequence belongs to the RNase HII family. It depends on Mn(2+) as a cofactor. Requires Mg(2+) as cofactor.

The protein localises to the cytoplasm. The enzyme catalyses Endonucleolytic cleavage to 5'-phosphomonoester.. Its function is as follows. Endonuclease that specifically degrades the RNA of RNA-DNA hybrids. The protein is Ribonuclease HII of Cereibacter sphaeroides (strain ATCC 17025 / ATH 2.4.3) (Rhodobacter sphaeroides).